Reading from the N-terminus, the 146-residue chain is Ribonuclease H (146 aa).

The 143-residue stretch at Met-1–Lys-143 folds into the RNase H type-1 domain. Mg(2+)-binding residues include Asp-10, Glu-48, Asp-70, and Asp-135.

Belongs to the RNase H family. In terms of assembly, monomer. Mg(2+) is required as a cofactor.

It localises to the cytoplasm. The enzyme catalyses Endonucleolytic cleavage to 5'-phosphomonoester.. Functionally, endonuclease that specifically degrades the RNA of RNA-DNA hybrids. The chain is Ribonuclease H from Chlorobium phaeobacteroides (strain DSM 266 / SMG 266 / 2430).